Here is a 145-residue protein sequence, read N- to C-terminus: Large ribosomal subunit protein uL16 (145 aa).

It belongs to the universal ribosomal protein uL16 family. Part of the 50S ribosomal subunit.

Its function is as follows. Binds 23S rRNA and is also seen to make contacts with the A and possibly P site tRNAs. The polypeptide is Large ribosomal subunit protein uL16 (Herpetosiphon aurantiacus (strain ATCC 23779 / DSM 785 / 114-95)).